Consider the following 310-residue polypeptide: Porphobilinogen deaminase (310 aa).

Position 241 is an S-(dipyrrolylmethanemethyl)cysteine (Cys241).

It belongs to the HMBS family. Monomer. Dipyrromethane is required as a cofactor.

The catalysed reaction is 4 porphobilinogen + H2O = hydroxymethylbilane + 4 NH4(+). Its pathway is porphyrin-containing compound metabolism; protoporphyrin-IX biosynthesis; coproporphyrinogen-III from 5-aminolevulinate: step 2/4. Functionally, tetrapolymerization of the monopyrrole PBG into the hydroxymethylbilane pre-uroporphyrinogen in several discrete steps. The chain is Porphobilinogen deaminase from Lysinibacillus sphaericus (strain C3-41).